A 219-amino-acid chain; its full sequence is Probable transaldolase (219 aa).

Lysine 83 serves as the catalytic Schiff-base intermediate with substrate.

It belongs to the transaldolase family. Type 3B subfamily.

Its subcellular location is the cytoplasm. The catalysed reaction is D-sedoheptulose 7-phosphate + D-glyceraldehyde 3-phosphate = D-erythrose 4-phosphate + beta-D-fructose 6-phosphate. Its pathway is carbohydrate degradation; pentose phosphate pathway; D-glyceraldehyde 3-phosphate and beta-D-fructose 6-phosphate from D-ribose 5-phosphate and D-xylulose 5-phosphate (non-oxidative stage): step 2/3. Functionally, transaldolase is important for the balance of metabolites in the pentose-phosphate pathway. The chain is Probable transaldolase from Cereibacter sphaeroides (strain ATCC 17025 / ATH 2.4.3) (Rhodobacter sphaeroides).